We begin with the raw amino-acid sequence, 260 residues long: ATP-dependent zinc metalloprotease FTSH, chloroplastic (260 aa).

Histidine 219 contacts Zn(2+). Residue glutamate 220 is part of the active site. Histidine 223 serves as a coordination point for Zn(2+).

It in the N-terminal section; belongs to the AAA ATPase family. In the C-terminal section; belongs to the peptidase M41 family. The cofactor is Zn(2+).

It is found in the plastid. The protein resides in the chloroplast thylakoid membrane. Its function is as follows. Probable ATP-dependent zinc metallopeptidase. The polypeptide is ATP-dependent zinc metalloprotease FTSH, chloroplastic (Helianthus annuus (Common sunflower)).